The sequence spans 77 residues: Protein ImpC (77 aa).

It belongs to the DinI family.

The polypeptide is Protein ImpC (impC) (Salmonella typhimurium).